A 309-amino-acid chain; its full sequence is 11-beta-hydroxysteroid dehydrogenase-like 3 (309 aa).

A helical; Signal-anchor for type II membrane protein transmembrane segment spans residues 10–30 (LLLPPLTIIFLFLFYPFYLLI). NADP(+)-binding positions include 54–80 (GASS…VARR) and Asp-105. Ser-184 serves as a coordination point for substrate. Tyr-197 serves as the catalytic Proton acceptor. Residues 197–201 (YAASK) and Lys-201 contribute to the NADP(+) site.

The protein belongs to the short-chain dehydrogenases/reductases (SDR) family.

It is found in the membrane. The polypeptide is 11-beta-hydroxysteroid dehydrogenase-like 3 (HSD3) (Arabidopsis thaliana (Mouse-ear cress)).